The following is a 1058-amino-acid chain: Carbamoyl phosphate synthase large chain (1058 aa).

Residues 1–401 form a carboxyphosphate synthetic domain region; it reads MPKRTDIQKI…SLLKACRSLE (401 aa). 12 residues coordinate ATP: R129, R169, G175, G176, R208, I210, E215, G241, I242, H243, Q284, and E298. The ATP-grasp 1 domain occupies 133–327; the sequence is KQLMEELEQP…IAKLAAKIAV (195 aa). Residues Q284, E298, and N300 each contribute to the Mg(2+) site. Q284, E298, and N300 together coordinate Mn(2+). The interval 402–546 is oligomerization domain; that stretch reads IGVHHNEIPE…YSTYGWENES (145 aa). The tract at residues 547-929 is carbamoyl phosphate synthetic domain; it reads IRSDKESVLV…ALYKAFEASY (383 aa). The 191-residue stretch at 671 to 861 folds into the ATP-grasp 2 domain; that stretch reads EQALKELDIP…MAQVATKLIL (191 aa). ATP is bound by residues R707, S746, I748, E752, G777, V778, H779, S780, Q820, and E832. Residues Q820, E832, and N834 each coordinate Mg(2+). Mn(2+) contacts are provided by Q820, E832, and N834. Residues 930 to 1058 form the MGS-like domain; the sequence is LHLPTFGNVV…ESRSFVTEAI (129 aa). Residues 930–1058 form an allosteric domain region; that stretch reads LHLPTFGNVV…ESRSFVTEAI (129 aa).

The protein belongs to the CarB family. Composed of two chains; the small (or glutamine) chain promotes the hydrolysis of glutamine to ammonia, which is used by the large (or ammonia) chain to synthesize carbamoyl phosphate. Tetramer of heterodimers (alpha,beta)4. Mg(2+) is required as a cofactor. Requires Mn(2+) as cofactor.

The enzyme catalyses hydrogencarbonate + L-glutamine + 2 ATP + H2O = carbamoyl phosphate + L-glutamate + 2 ADP + phosphate + 2 H(+). It carries out the reaction hydrogencarbonate + NH4(+) + 2 ATP = carbamoyl phosphate + 2 ADP + phosphate + 2 H(+). Its pathway is amino-acid biosynthesis; L-arginine biosynthesis; carbamoyl phosphate from bicarbonate: step 1/1. The protein operates within pyrimidine metabolism; UMP biosynthesis via de novo pathway; (S)-dihydroorotate from bicarbonate: step 1/3. Functionally, large subunit of the glutamine-dependent carbamoyl phosphate synthetase (CPSase). CPSase catalyzes the formation of carbamoyl phosphate from the ammonia moiety of glutamine, carbonate, and phosphate donated by ATP, constituting the first step of 2 biosynthetic pathways, one leading to arginine and/or urea and the other to pyrimidine nucleotides. The large subunit (synthetase) binds the substrates ammonia (free or transferred from glutamine from the small subunit), hydrogencarbonate and ATP and carries out an ATP-coupled ligase reaction, activating hydrogencarbonate by forming carboxy phosphate which reacts with ammonia to form carbamoyl phosphate. This chain is Carbamoyl phosphate synthase large chain, found in Streptococcus pneumoniae serotype 2 (strain D39 / NCTC 7466).